Consider the following 418-residue polypeptide: MTISLTPLDLSAIRADFPILKRVMRGGNQLAYLDSGATSQRPVQVLDAEREFLVTSNGAVHRGAHQLMEEATDAYERGRVDIAAFIGAAADELVFTKNATESLNLVSYVFGDNRFEGTSGDGGDVIVTTELEHHANLIPWQELARRIGATLRWYGVTDDGQIDLDSLQLDERVKVVAFSHHSNVTGAVAPVRELVARAKEVGALTVLDACQSVPHQPVDLHGLGVDFAAFSGHKMLGPNGIGVLYARRELLSVMPPFLTGGSMIETVTMESTTYAPAPQRFEAGTPMTSQVVGLAAAARYLDAIGMKAVEAHERELVAAAVEGLSRIDGVRIIGPKSMENRGSPVSFVVDGVHAHDIGQVLDDDGVAVRVGHHCALPLHRRFALAATARASFAVYNTVDEVDRLVAGVLRALDFFGRE.

Lys234 carries the post-translational modification N6-(pyridoxal phosphate)lysine. The active-site Cysteine persulfide intermediate is the Cys374.

Belongs to the class-V pyridoxal-phosphate-dependent aminotransferase family. Csd subfamily. The cofactor is pyridoxal 5'-phosphate.

It catalyses the reaction (sulfur carrier)-H + L-cysteine = (sulfur carrier)-SH + L-alanine. In terms of biological role, catalyzes the removal of elemental sulfur and selenium atoms from L-cysteine, L-cystine, L-selenocysteine, and L-selenocystine to produce L-alanine. The sequence is that of Probable cysteine desulfurase 2 (csd2) from Mycobacterium leprae (strain TN).